The sequence spans 141 residues: Aspartate 1-decarboxylase 1 (141 aa).

Catalysis depends on serine 25, which acts as the Schiff-base intermediate with substrate; via pyruvic acid. At serine 25 the chain carries Pyruvic acid (Ser). Residue threonine 57 coordinates substrate. Tyrosine 58 (proton donor) is an active-site residue. 73–75 (GPA) lines the substrate pocket.

This sequence belongs to the PanD family. As to quaternary structure, heterooctamer of four alpha and four beta subunits. Pyruvate serves as cofactor. Is synthesized initially as an inactive proenzyme, which is activated by self-cleavage at a specific serine bond to produce a beta-subunit with a hydroxyl group at its C-terminus and an alpha-subunit with a pyruvoyl group at its N-terminus.

It localises to the cytoplasm. The catalysed reaction is L-aspartate + H(+) = beta-alanine + CO2. The protein operates within cofactor biosynthesis; (R)-pantothenate biosynthesis; beta-alanine from L-aspartate: step 1/1. In terms of biological role, catalyzes the pyruvoyl-dependent decarboxylation of aspartate to produce beta-alanine. The chain is Aspartate 1-decarboxylase 1 from Paenarthrobacter aurescens (strain TC1).